The chain runs to 158 residues: Scytalone dehydratase-like protein CPUR_05428 (158 aa).

Positions 24 and 44 each coordinate substrate. Active-site residues include histidine 79 and histidine 104.

The protein belongs to the scytalone dehydratase family.

The protein operates within pigment biosynthesis. Scytalone dehydratase-like protein; part of the ergochrome gene cluster responsible for the typical purple-black color of the ergot sclerotia. The ergochrome gene cluster produces several ergot pigments including the yellow ergochrome secalonic acid and its derivatives, as well as the red anthraquinones endocrocin and clavorubin. The pathway begins with the synthesis of atrochrysone thioester by the polyketide synthase (PKS) CPUR_05437. The atrochrysone carboxyl ACP thioesterase CPUR_05436 then breaks the thioester bond and releases the atrochrysone carboxylic acid from CPUR_05437. The atrochrysone carboxylic acid is then converted to atrochrysone which is further transformed into emodin anthrone. The next step is performed by the anthrone oxygenase CPUR_05434 that catalyzes the oxidation of emodinanthrone to emodin. Emodin is further modified to yield monodictyphenone via several steps involving CPUR_05427, CPUR_05428, CPUR_05429 and CPUR_05430. The short chain dehydrogenase/reductase CPUR_05418 then catalyzes the C-5 ketoreduction to give the xanthone skeleton of the monomeric units. Ergochromes formation requires further dimerization steps of different xanthone units, probably catalyzed by the cytochrome P450 monooxygenase CPUR_05419. CPUR_05425, CPUR_05426 and CPUR_05431 are unique to Claviceps, thus it is likely that they are involved in further modification of xanthone units or in their dimerization. The yellow ergochromes and the red anthraquinone pigments endocrocin and clavorubin are products from the same PKS derived precursors and the latter are likely shunt products in the pathway of xanthone biosynthesis. It is proposed that atrochrysone carboxylic acid released from the PKS CPUR_05437 can also be converted to endocrocin anthrone which is further oxidized into endocrocin by CPUR_05435. Endocrocin could be then modified to clavorubin, possibly by CPUR_05423 and CPUR_05431. Clavorubin is the principal anthraquinone metabolite produced by the cluster with a much higher yield compared to endocrocin. This is Scytalone dehydratase-like protein CPUR_05428 from Claviceps purpurea (strain 20.1) (Ergot fungus).